Reading from the N-terminus, the 228-residue chain is Phosphoglycolate phosphatase (228 aa).

The active-site Nucleophile is the Asp-9. Positions 9 and 11 each coordinate Mg(2+). Lys-151 provides a ligand contact to substrate. The Mg(2+) site is built by Asp-174 and Asp-178.

It belongs to the archaeal SPP-like hydrolase family. Mg(2+) is required as a cofactor.

It catalyses the reaction 2-phosphoglycolate + H2O = glycolate + phosphate. Its function is as follows. Catalyzes the dephosphorylation of 2-phosphoglycolate. The protein is Phosphoglycolate phosphatase of Pyrobaculum islandicum (strain DSM 4184 / JCM 9189 / GEO3).